A 345-amino-acid chain; its full sequence is 2-oxoglutarate and iron-dependent oxygenase domain-containing protein 2 (345 aa).

Positions 207–301 (DSHKAFVVKY…RWNLIIWMRA (95 aa)) constitute a Fe2OG dioxygenase domain. Fe cation is bound by residues His-227, Asp-229, and His-282. Arg-292 is a 2-oxoglutarate binding site.

This sequence belongs to the OGFOD2 family. It depends on Fe(2+) as a cofactor. The cofactor is L-ascorbate.

The chain is 2-oxoglutarate and iron-dependent oxygenase domain-containing protein 2 (ogfod2) from Danio rerio (Zebrafish).